The primary structure comprises 563 residues: Formate--tetrahydrofolate ligase (563 aa).

ATP is bound at residue 65 to 72; the sequence is TPLGEGKT.

It belongs to the formate--tetrahydrofolate ligase family.

It carries out the reaction (6S)-5,6,7,8-tetrahydrofolate + formate + ATP = (6R)-10-formyltetrahydrofolate + ADP + phosphate. It functions in the pathway one-carbon metabolism; tetrahydrofolate interconversion. The polypeptide is Formate--tetrahydrofolate ligase (Cutibacterium acnes (strain DSM 16379 / KPA171202) (Propionibacterium acnes)).